The primary structure comprises 203 residues: ADP-ribosylation factor-like protein 6-interacting protein 1 (203 aa).

The Cytoplasmic portion of the chain corresponds to 1 to 41 (MAEGDNRSTNLLAAETASLEEQLQGWGEVMLMADKVLRWER). Residues 42–62 (AWFPPAIMGVVSLVFLIIYYL) form a helical membrane-spanning segment. Topologically, residues 63 to 65 (DPS) are lumenal. A helical transmembrane segment spans residues 66–86 (VLSGVSCFVMFLCLADYLVPI). Topologically, residues 87 to 133 (LAPRIFGSNKWTTEQQQRFHEICSNLVKTRRRAVGWWKRLFTLKEEK) are cytoplasmic. The chain crosses the membrane as a helical span at residues 134–175 (PKMYFMTMIVSLAAVAWVGQQVHNLLLTYLIVTSLLLLPGLN). At 176–203 (QHGIILKYIGMAKREINKLLKQKEKKNE) the chain is on the lumenal side.

This sequence belongs to the ARL6ip family. As to quaternary structure, homooligomer. Heterodimer with ARL6IP5. Interacts with ARL6. Interacts with TMEM33. Interacts with ATL1. In terms of tissue distribution, expressed in all hematopoietic cell lineages, but the highest level of expression is found in early myeloid progenitor cells. Expressed in brain, bone marrow, thymus and lung. Expressed at low level in liver, kidney and spleen. Not detected in heart.

It localises to the endomembrane system. The protein resides in the endoplasmic reticulum membrane. It is found in the endoplasmic reticulum. Functionally, positively regulates SLC1A1/EAAC1-mediated glutamate transport by increasing its affinity for glutamate in a PKC activity-dependent manner. Promotes the catalytic efficiency of SLC1A1/EAAC1 probably by reducing its interaction with ARL6IP5, a negative regulator of SLC1A1/EAAC1-mediated glutamate transport. Plays a role in the formation and stabilization of endoplasmic reticulum tubules. Negatively regulates apoptosis, possibly by modulating the activity of caspase-9 (CASP9). Inhibits cleavage of CASP9-dependent substrates and downstream markers of apoptosis but not CASP9 itself. May be involved in protein transport, membrane trafficking, or cell signaling during hematopoietic maturation. The chain is ADP-ribosylation factor-like protein 6-interacting protein 1 (ARL6IP1) from Homo sapiens (Human).